A 291-amino-acid chain; its full sequence is Ribonuclease Z (291 aa).

Positions 61, 63, 65, 66, 133, 201, and 257 each coordinate Zn(2+). The active-site Proton acceptor is the Asp-65.

Belongs to the RNase Z family. Homodimer. Zn(2+) is required as a cofactor.

It carries out the reaction Endonucleolytic cleavage of RNA, removing extra 3' nucleotides from tRNA precursor, generating 3' termini of tRNAs. A 3'-hydroxy group is left at the tRNA terminus and a 5'-phosphoryl group is left at the trailer molecule.. In terms of biological role, zinc phosphodiesterase, which displays some tRNA 3'-processing endonuclease activity. Probably involved in tRNA maturation, by removing a 3'-trailer from precursor tRNA. The protein is Ribonuclease Z of Saccharolobus islandicus (strain M.16.27) (Sulfolobus islandicus).